The chain runs to 428 residues: Probable pectin lyase F (428 aa).

A signal peptide spans 1–20 (MVLLHPLLTAAALLGASARA). Cys83 and Cys107 form a disulfide bridge. The active site involves Arg257. The N-linked (GlcNAc...) asparagine glycan is linked to Asn276. Cys324 and Cys332 are oxidised to a cystine. 2 disordered regions span residues 337 to 367 (LTSSGELSGNDEAVLSGWPKGEGDTKAMTTD) and 383 to 428 (GSGG…HHHY). Low complexity predominate over residues 389–417 (AASSSASITPSPTSSAIPSSSATPSSSAY). The span at 418–428 (ARRHYARHHHY) shows a compositional bias: basic residues.

The protein belongs to the polysaccharide lyase 1 family.

The protein localises to the secreted. The catalysed reaction is Eliminative cleavage of (1-&gt;4)-alpha-D-galacturonan methyl ester to give oligosaccharides with 4-deoxy-6-O-methyl-alpha-D-galact-4-enuronosyl groups at their non-reducing ends.. Its function is as follows. Pectinolytic enzymes consist of four classes of enzymes: pectin lyase, polygalacturonase, pectin methylesterase and rhamnogalacturonase. Among pectinolytic enzymes, pectin lyase is the most important in depolymerization of pectin, since it cleaves internal glycosidic bonds of highly methylated pectins. The sequence is that of Probable pectin lyase F (pelF) from Aspergillus flavus (strain ATCC 200026 / FGSC A1120 / IAM 13836 / NRRL 3357 / JCM 12722 / SRRC 167).